Consider the following 370-residue polypeptide: Queuine tRNA-ribosyltransferase (370 aa).

D89 functions as the Proton acceptor in the catalytic mechanism. Substrate contacts are provided by residues 89–93 (DSGGF), D143, Q185, and G212. The segment at 243 to 249 (GVGTPED) is RNA binding. The active-site Nucleophile is the D262. The interval 267-271 (TRNAR) is RNA binding; important for wobble base 34 recognition. Residues C300, C302, C305, and H331 each contribute to the Zn(2+) site.

This sequence belongs to the queuine tRNA-ribosyltransferase family. In terms of assembly, homodimer. Within each dimer, one monomer is responsible for RNA recognition and catalysis, while the other monomer binds to the replacement base PreQ1. Zn(2+) serves as cofactor.

It catalyses the reaction 7-aminomethyl-7-carbaguanine + guanosine(34) in tRNA = 7-aminomethyl-7-carbaguanosine(34) in tRNA + guanine. Its pathway is tRNA modification; tRNA-queuosine biosynthesis. In terms of biological role, catalyzes the base-exchange of a guanine (G) residue with the queuine precursor 7-aminomethyl-7-deazaguanine (PreQ1) at position 34 (anticodon wobble position) in tRNAs with GU(N) anticodons (tRNA-Asp, -Asn, -His and -Tyr). Catalysis occurs through a double-displacement mechanism. The nucleophile active site attacks the C1' of nucleotide 34 to detach the guanine base from the RNA, forming a covalent enzyme-RNA intermediate. The proton acceptor active site deprotonates the incoming PreQ1, allowing a nucleophilic attack on the C1' of the ribose to form the product. After dissociation, two additional enzymatic reactions on the tRNA convert PreQ1 to queuine (Q), resulting in the hypermodified nucleoside queuosine (7-(((4,5-cis-dihydroxy-2-cyclopenten-1-yl)amino)methyl)-7-deazaguanosine). The chain is Queuine tRNA-ribosyltransferase from Methylobacillus flagellatus (strain ATCC 51484 / DSM 6875 / VKM B-1610 / KT).